Consider the following 179-residue polypeptide: ATP synthase subunit delta (179 aa).

The protein belongs to the ATPase delta chain family. F-type ATPases have 2 components, F(1) - the catalytic core - and F(0) - the membrane proton channel. F(1) has five subunits: alpha(3), beta(3), gamma(1), delta(1), epsilon(1). F(0) has three main subunits: a(1), b(2) and c(10-14). The alpha and beta chains form an alternating ring which encloses part of the gamma chain. F(1) is attached to F(0) by a central stalk formed by the gamma and epsilon chains, while a peripheral stalk is formed by the delta and b chains.

Its subcellular location is the cell inner membrane. Functionally, f(1)F(0) ATP synthase produces ATP from ADP in the presence of a proton or sodium gradient. F-type ATPases consist of two structural domains, F(1) containing the extramembraneous catalytic core and F(0) containing the membrane proton channel, linked together by a central stalk and a peripheral stalk. During catalysis, ATP synthesis in the catalytic domain of F(1) is coupled via a rotary mechanism of the central stalk subunits to proton translocation. This protein is part of the stalk that links CF(0) to CF(1). It either transmits conformational changes from CF(0) to CF(1) or is implicated in proton conduction. The protein is ATP synthase subunit delta of Burkholderia lata (strain ATCC 17760 / DSM 23089 / LMG 22485 / NCIMB 9086 / R18194 / 383).